A 293-amino-acid chain; its full sequence is ATP synthase gamma chain (293 aa).

This sequence belongs to the ATPase gamma chain family. In terms of assembly, F-type ATPases have 2 components, CF(1) - the catalytic core - and CF(0) - the membrane proton channel. CF(1) has five subunits: alpha(3), beta(3), gamma(1), delta(1), epsilon(1). CF(0) has three main subunits: a, b and c.

The protein localises to the cell inner membrane. Its function is as follows. Produces ATP from ADP in the presence of a proton gradient across the membrane. The gamma chain is believed to be important in regulating ATPase activity and the flow of protons through the CF(0) complex. This Beijerinckia indica subsp. indica (strain ATCC 9039 / DSM 1715 / NCIMB 8712) protein is ATP synthase gamma chain.